Consider the following 915-residue polypeptide: Protein translocase subunit SecA (915 aa).

Residues Gln-87, 105–109 (GEGKT), and Asp-516 contribute to the ATP site. A disordered region spans residues 854–915 (QKMQMRHEQL…KYKNCHGQLE (62 aa)). 4 residues coordinate Zn(2+): Cys-899, Cys-901, Cys-910, and His-911.

This sequence belongs to the SecA family. Monomer and homodimer. Part of the essential Sec protein translocation apparatus which comprises SecA, SecYEG and auxiliary proteins SecDF-YajC and YidC. Requires Zn(2+) as cofactor.

The protein localises to the cell inner membrane. It localises to the cytoplasm. The enzyme catalyses ATP + H2O + cellular proteinSide 1 = ADP + phosphate + cellular proteinSide 2.. Functionally, part of the Sec protein translocase complex. Interacts with the SecYEG preprotein conducting channel. Has a central role in coupling the hydrolysis of ATP to the transfer of proteins into and across the cell membrane, serving both as a receptor for the preprotein-SecB complex and as an ATP-driven molecular motor driving the stepwise translocation of polypeptide chains across the membrane. The sequence is that of Protein translocase subunit SecA from Cellvibrio japonicus (strain Ueda107) (Pseudomonas fluorescens subsp. cellulosa).